Consider the following 388-residue polypeptide: Phosphopentomutase (388 aa).

6 residues coordinate Mn(2+): Asp10, Asp282, His287, Asp323, His324, and His335.

This sequence belongs to the phosphopentomutase family. Mn(2+) is required as a cofactor.

The protein resides in the cytoplasm. The enzyme catalyses 2-deoxy-alpha-D-ribose 1-phosphate = 2-deoxy-D-ribose 5-phosphate. It carries out the reaction alpha-D-ribose 1-phosphate = D-ribose 5-phosphate. Its pathway is carbohydrate degradation; 2-deoxy-D-ribose 1-phosphate degradation; D-glyceraldehyde 3-phosphate and acetaldehyde from 2-deoxy-alpha-D-ribose 1-phosphate: step 1/2. Functionally, isomerase that catalyzes the conversion of deoxy-ribose 1-phosphate (dRib-1-P) and ribose 1-phosphate (Rib-1-P) to deoxy-ribose 5-phosphate (dRib-5-P) and ribose 5-phosphate (Rib-5-P), respectively. The chain is Phosphopentomutase from Acetivibrio thermocellus (strain ATCC 27405 / DSM 1237 / JCM 9322 / NBRC 103400 / NCIMB 10682 / NRRL B-4536 / VPI 7372) (Clostridium thermocellum).